The primary structure comprises 316 residues: Glutathione synthetase (316 aa).

Residues 124–311 enclose the ATP-grasp domain; sequence NEKLAALLFP…IAGLLFDAIE (188 aa). 151-208 is an ATP binding site; that stretch reads FVLAHGQAVLKPLDGMGGRSIFRSGTGDPNLNVILETLTDGGRKLTLAQRFIPDITAG. The Mg(2+) site is built by E282 and N284.

It belongs to the prokaryotic GSH synthase family. It depends on Mg(2+) as a cofactor. Mn(2+) serves as cofactor.

It carries out the reaction gamma-L-glutamyl-L-cysteine + glycine + ATP = glutathione + ADP + phosphate + H(+). The protein operates within sulfur metabolism; glutathione biosynthesis; glutathione from L-cysteine and L-glutamate: step 2/2. This is Glutathione synthetase from Xanthomonas campestris pv. campestris (strain ATCC 33913 / DSM 3586 / NCPPB 528 / LMG 568 / P 25).